The primary structure comprises 540 residues: Probable tubulin polyglutamylase TTLL2 (540 aa).

One can recognise a TTL domain in the interval 41–384 (LKPLVFRVDE…NGLRSEEKKC (344 aa)). ATP is bound by residues lysine 169, 175-176 (RG), 197-200 (QKYI), and 210-212 (KCD). Residue arginine 175 coordinates a protein. L-glutamate is bound at residue arginine 236. ATP is bound at residue 255 to 256 (TN). Residues serine 258 and lysine 278 each contribute to the L-glutamate site. Mg(2+)-binding residues include aspartate 330, glutamate 343, and asparagine 345. Residue lysine 361 participates in L-glutamate binding. Residues 479 to 499 (SQSQPHKMKGPAGDLPEAGST) are disordered.

Belongs to the tubulin--tyrosine ligase family. Mg(2+) is required as a cofactor. In terms of tissue distribution, highly expressed in brain, kidney, liver and testis. Expressed in heart, lung, muscle and spleen.

Functionally, probable tubulin polyglutamylase that generates side chains of glutamate on the gamma-carboxyl group of specific glutamate residues within the C-terminal tail of target proteins. Similar to TTLL1, may acquire enzymatic activity only in complex with other proteins as it is most likely lacking domains important for autonomous activity. Probably involved in the side-chain initiation step of the polyglutamylation reaction rather than the elongation step. The sequence is that of Probable tubulin polyglutamylase TTLL2 from Mus musculus (Mouse).